A 312-amino-acid polypeptide reads, in one-letter code: Apolipoprotein E (312 aa).

An N-terminal signal peptide occupies residues methionine 1–alanine 18. 8 repeat units span residues valine 72–glycine 93, proline 94–glycine 115, alanine 116–glycine 137, glutamine 138–methionine 159, arginine 160–glutamate 181, arginine 182–alanine 203, asparagine 204–arginine 225, and glycine 226–glutamate 247. Positions valine 72 to glutamate 247 are 8 X 22 AA approximate tandem repeats. Methionine 135 is subject to Methionine sulfoxide. Serine 139 carries the post-translational modification Phosphoserine. The interval histidine 150–arginine 160 is LDL and other lipoprotein receptors binding. The LDL receptor binding stretch occupies residues histidine 150 to arginine 160. Methionine 154 to arginine 157 lines the heparin pocket. Residues threonine 202 to methionine 282 form a lipid-binding and lipoprotein association region. Residue serine 221–leucine 228 participates in heparin binding. The tract at residues glutamine 258–glutamine 312 is homooligomerization. Residues arginine 270–methionine 282 are specificity for association with VLDL.

It belongs to the apolipoprotein A1/A4/E family. In terms of assembly, homotetramer. May interact with ABCA1; functionally associated with ABCA1 in the biogenesis of HDLs. May interact with APP/A4 amyloid-beta peptide; the interaction is extremely stable in vitro but its physiological significance is unclear. May interact with MAPT. May interact with MAP2. In the cerebrospinal fluid, interacts with secreted SORL1. Interacts with PMEL; this allows the loading of PMEL luminal fragment on ILVs to induce fibril nucleation. Post-translationally, APOE exists as multiple glycosylated and sialylated glycoforms within cells and in plasma. The extent of glycosylation and sialylation are tissue and context specific. Glycated in plasma VLDL. In terms of processing, phosphorylated by FAM20C in the extracellular medium.

Its subcellular location is the secreted. The protein resides in the extracellular space. It localises to the extracellular matrix. The protein localises to the extracellular vesicle. It is found in the endosome. Its subcellular location is the multivesicular body. Functionally, APOE is an apolipoprotein, a protein associating with lipid particles, that mainly functions in lipoprotein-mediated lipid transport between organs via the plasma and interstitial fluids. APOE is a core component of plasma lipoproteins and is involved in their production, conversion and clearance. Apolipoproteins are amphipathic molecules that interact both with lipids of the lipoprotein particle core and the aqueous environment of the plasma. As such, APOE associates with chylomicrons, chylomicron remnants, very low density lipoproteins (VLDL) and intermediate density lipoproteins (IDL) but shows a preferential binding to high-density lipoproteins (HDL). It also binds a wide range of cellular receptors including the LDL receptor/LDLR, the LDL receptor-related proteins LRP1, LRP2 and LRP8 and the very low-density lipoprotein receptor/VLDLR that mediate the cellular uptake of the APOE-containing lipoprotein particles. Finally, APOE also has a heparin-binding activity and binds heparan-sulfate proteoglycans on the surface of cells, a property that supports the capture and the receptor-mediated uptake of APOE-containing lipoproteins by cells. A main function of APOE is to mediate lipoprotein clearance through the uptake of chylomicrons, VLDLs, and HDLs by hepatocytes. APOE is also involved in the biosynthesis by the liver of VLDLs as well as their uptake by peripheral tissues ensuring the delivery of triglycerides and energy storage in muscle, heart and adipose tissues. By participating in the lipoprotein-mediated distribution of lipids among tissues, APOE plays a critical role in plasma and tissues lipid homeostasis. APOE is also involved in two steps of reverse cholesterol transport, the HDLs-mediated transport of cholesterol from peripheral tissues to the liver, and thereby plays an important role in cholesterol homeostasis. First, it is functionally associated with ABCA1 in the biogenesis of HDLs in tissues. Second, it is enriched in circulating HDLs and mediates their uptake by hepatocytes. APOE also plays an important role in lipid transport in the central nervous system, regulating neuron survival and sprouting. The protein is Apolipoprotein E (Apoe) of Rattus rattus (Black rat).